The following is a 497-amino-acid chain: UDP-N-acetylmuramoyl-L-alanyl-D-glutamate--2,6-diaminopimelate ligase (497 aa).

Residues Leu-27 and Ser-29 each coordinate UDP-N-acetyl-alpha-D-muramoyl-L-alanyl-D-glutamate. Residue 116–122 (GTNGKTT) coordinates ATP. Residues Asn-157, 158–159 (TT), Ser-185, Gln-191, and Arg-193 contribute to the UDP-N-acetyl-alpha-D-muramoyl-L-alanyl-D-glutamate site. An N6-carboxylysine modification is found at Lys-225. Residues Arg-392, 416–419 (DNPR), Gly-467, and Glu-471 each bind meso-2,6-diaminopimelate. The Meso-diaminopimelate recognition motif motif lies at 416-419 (DNPR).

The protein belongs to the MurCDEF family. MurE subfamily. The cofactor is Mg(2+). In terms of processing, carboxylation is probably crucial for Mg(2+) binding and, consequently, for the gamma-phosphate positioning of ATP.

Its subcellular location is the cytoplasm. The enzyme catalyses UDP-N-acetyl-alpha-D-muramoyl-L-alanyl-D-glutamate + meso-2,6-diaminopimelate + ATP = UDP-N-acetyl-alpha-D-muramoyl-L-alanyl-gamma-D-glutamyl-meso-2,6-diaminopimelate + ADP + phosphate + H(+). The protein operates within cell wall biogenesis; peptidoglycan biosynthesis. In terms of biological role, catalyzes the addition of meso-diaminopimelic acid to the nucleotide precursor UDP-N-acetylmuramoyl-L-alanyl-D-glutamate (UMAG) in the biosynthesis of bacterial cell-wall peptidoglycan. The polypeptide is UDP-N-acetylmuramoyl-L-alanyl-D-glutamate--2,6-diaminopimelate ligase (Buchnera aphidicola subsp. Schizaphis graminum (strain Sg)).